The chain runs to 231 residues: Acyl-protein thioesterase 2 (231 aa).

Residue C2 is the site of S-palmitoyl cysteine attachment. The residue at position 82 (S82) is a Phosphoserine. Residues S122, D176, and H210 each act as charge relay system in the active site.

Belongs to the AB hydrolase superfamily. AB hydrolase 2 family. In terms of tissue distribution, ubiquitous; detected at low levels.

The protein resides in the cytoplasm. The enzyme catalyses S-hexadecanoyl-L-cysteinyl-[protein] + H2O = L-cysteinyl-[protein] + hexadecanoate + H(+). It carries out the reaction prostaglandin E2 1-glyceryl ester + H2O = prostaglandin E2 + glycerol + H(+). It catalyses the reaction 1-hexadecanoyl-sn-glycero-3-phosphocholine + H2O = sn-glycerol 3-phosphocholine + hexadecanoate + H(+). The catalysed reaction is 1-octadecanoyl-sn-glycero-3-phosphocholine + H2O = octadecanoate + sn-glycerol 3-phosphocholine + H(+). The enzyme catalyses 1-hexadecanoyl-sn-glycero-3-phosphate + H2O = sn-glycerol 3-phosphate + hexadecanoate + H(+). It carries out the reaction 1-hexadecanoyl-sn-glycero-3-phospho-L-serine + H2O = sn-glycero-3-phospho-L-serine + hexadecanoate + H(+). Its function is as follows. Acts as an acyl-protein thioesterase hydrolyzing fatty acids from S-acylated cysteine residues in proteins such as trimeric G alpha proteins, GSDMD, GAP43, ZDHHC6 or HRAS. Deacylates GAP43. Mediates depalmitoylation of ZDHHC6. Has lysophospholipase activity. Hydrolyzes prostaglandin glycerol esters (PG-Gs). Hydrolyzes PG-Gs in the following order prostaglandin D2-glycerol ester (PGD2-G) &gt; prostaglandin E2 glycerol ester (PGE2-G) &gt; prostaglandin F2-alpha-glycerol ester (PGF2-alpha-G). Hydrolyzes 1-arachidonoylglycerol but not 2-arachidonoylglycerol or arachidonoylethanolamide. This chain is Acyl-protein thioesterase 2 (Lypla2), found in Mus musculus (Mouse).